A 147-amino-acid polypeptide reads, in one-letter code: Microsomal glutathione S-transferase 2 (147 aa).

The next 3 membrane-spanning stretches (helical) occupy residues 6 to 26, 59 to 79, and 111 to 131; these read ILLA…ALQV, FYPI…QVFA, and SLGI…NSFL.

Belongs to the MAPEG family. Homotrimer. Liver, spleen, skeletal muscle, heart, adrenals, pancreas, prostate, testis, fetal liver, and fetal spleen. Very low expression in lung, brain, placenta and bone marrow. Abundantly expressed in human umbilical vein endothelial cells (at protein level).

It is found in the endoplasmic reticulum membrane. It localises to the microsome membrane. It carries out the reaction RX + glutathione = an S-substituted glutathione + a halide anion + H(+). The catalysed reaction is 1-chloro-2,4-dinitrobenzene + glutathione = 2,4-dinitrophenyl-S-glutathione + chloride + H(+). It catalyses the reaction leukotriene C4 = leukotriene A4 + glutathione. The enzyme catalyses (5S)-hydroperoxy-(6E,8Z,11Z,14Z)-eicosatetraenoate + 2 glutathione = (5S)-hydroxy-(6E,8Z,11Z,14Z)-eicosatetraenoate + glutathione disulfide + H2O. Its activity is regulated as follows. Each monomer can bind on GSH molecule but only one subunit is catalytically active. In terms of biological role, catalyzes several different glutathione-dependent reactions. Catalyzes the glutathione-dependent reduction of lipid hydroperoxides, such as 5-HPETE. Has glutathione transferase activity, toward xenobiotic electrophiles, such as 1-chloro-2, 4-dinitrobenzene (CDNB). Also catalyzes the conjugation of leukotriene A4 with reduced glutathione to form leukotriene C4 (LTC4). Involved in oxidative DNA damage induced by ER stress and anticancer agents by activating LTC4 biosynthetic machinery in nonimmune cells. The protein is Microsomal glutathione S-transferase 2 (MGST2) of Homo sapiens (Human).